A 473-amino-acid chain; its full sequence is MKILYSLRRFYHVETLFNGTLALAGRDQETTGFAWWAGNARLINLSGKLLGAHVAHAGLIVFWAGGMNLFEVAHFVPEKPMYEQGLILLPHLATLGWGVGPGGEVIDTFPYFVSGVLHLISSAVLGFGGIYHALLGPETLEESFPFFGYVWKDRNKMTTILGIHLILLGLGAFLLVFKALYFGGVYDTWAPGGGDVRKITNLTLNPSVIFGYLLKSPFGGEGWIVSVDDLEDIIGGHVWLGSICILGGIWHILTKPFAWARRAFVWSGEAYLSYSLAALSVFGFIACCFVWFNNTAYPSEFYGPTGPEASQAQAFTFLVRDQRLGANVGSAQGPTGLGKYLMRSPTGEIIFGGETMRFWDLRAPWLEPLRGPNGLDLSRLKKDIQPWQERRSAEYMTHAPLGSLNSVGGVATEINAVNYVSPRSWLSTSHFVLGFFFFVGHLWHAGRARAAAAGFEKGIDRDLEPVLFMTPLS.

A propeptide spanning residues methionine 1–glutamate 14 is cleaved from the precursor. Threonine 15 carries the N-acetylthreonine modification. At threonine 15 the chain carries Phosphothreonine. Transmembrane regions (helical) follow at residues leucine 69–alanine 93, leucine 134–asparagine 155, lysine 178–threonine 200, lysine 255–serine 275, and tryptophan 291–alanine 312. Glutamate 367 serves as a coordination point for [CaMn4O5] cluster. A helical transmembrane segment spans residues arginine 447–proline 471.

The protein belongs to the PsbB/PsbC family. PsbC subfamily. In terms of assembly, PSII is composed of 1 copy each of membrane proteins PsbA, PsbB, PsbC, PsbD, PsbE, PsbF, PsbH, PsbI, PsbJ, PsbK, PsbL, PsbM, PsbT, PsbX, PsbY, PsbZ, Psb30/Ycf12, at least 3 peripheral proteins of the oxygen-evolving complex and a large number of cofactors. It forms dimeric complexes. The cofactor is Binds multiple chlorophylls and provides some of the ligands for the Ca-4Mn-5O cluster of the oxygen-evolving complex. It may also provide a ligand for a Cl- that is required for oxygen evolution. PSII binds additional chlorophylls, carotenoids and specific lipids..

The protein localises to the plastid. The protein resides in the chloroplast thylakoid membrane. In terms of biological role, one of the components of the core complex of photosystem II (PSII). It binds chlorophyll and helps catalyze the primary light-induced photochemical processes of PSII. PSII is a light-driven water:plastoquinone oxidoreductase, using light energy to abstract electrons from H(2)O, generating O(2) and a proton gradient subsequently used for ATP formation. This chain is Photosystem II CP43 reaction center protein, found in Lemna minor (Common duckweed).